A 1755-amino-acid chain; its full sequence is Transposon Ty1-BL Gag-Pol polyprotein (1755 aa).

3 stretches are compositionally biased toward polar residues: residues 20–31, 46–55, and 137–168; these read SVTSKEVQTTQD, VSTQANSQQP, and VGTHLNTPSPESGNSFPDSSSAKSNMTSTNQH. 3 disordered regions span residues 20 to 84, 137 to 173, and 350 to 420; these read SVTS…QNGP, VGTHLNTPSPESGNSFPDSSSAKSNMTSTNQHVRPPP, and QQES…IRGS. The tract at residues 299–401 is RNA-binding; the sequence is NNGIPINNKV…NSQSRTARAH (103 aa). A compositionally biased stretch (basic and acidic residues) spans 363-372; the sequence is SPSDEKKDSR. Polar residues predominate over residues 373 to 411; that stretch reads TYTNTTKPKSITRNSQKPNNSQSRTARAHNVSTFNNSPG. Residue Asp-461 is the For protease activity; shared with dimeric partner of the active site. Residues 583 to 640 form an integrase-type zinc finger-like region; that stretch reads NVHTSESTRKYPYPFIHRMLAHANAQTIRYSLKNNTITYFNESDVDWSSAIDYQCPDC. The region spanning 660–835 is the Integrase catalytic domain; it reads NSYEPFQYLH…AGLDISTLLP (176 aa). Mg(2+)-binding residues include Asp-671 and Asp-736. The tract at residues 956 to 1172 is disordered; that stretch reads SKAVSPTDST…LGGIGDSNAY (217 aa). Positions 960–969 are enriched in low complexity; that stretch reads SPTDSTPPST. Composition is skewed to polar residues over residues 1005–1017 and 1031–1043; these read STPQISDIESTDS and MSQSNTHESSYAS. Residues 1044-1053 are compositionally biased toward basic and acidic residues; that stretch reads KSKDFRHSDS. Composition is skewed to polar residues over residues 1054–1082 and 1095–1106; these read YSDNETNHTNVPISSTGGTNNKTVPQTSE and SIDTSSSESNSL. A Bipartite nuclear localization signal motif is present at residues 1178–1212; it reads KKRSLEDNETEIKVSRDTWNTKNMRSLEPPRSKKR. Positions 1338-1476 constitute a Reverse transcriptase Ty1/copia-type domain; sequence NNYHITQLDI…DILGLEIKYQ (139 aa). The Mg(2+) site is built by Asp-1346, Asp-1427, Asp-1428, Asp-1610, Glu-1652, and Asp-1685. An RNase H Ty1/copia-type domain is found at 1610–1752; that stretch reads DASYGNQPYY…IKTFKLLTNK (143 aa).

The capsid protein forms a homotrimer, from which the VLPs are assembled. The protease is a homodimer, whose active site consists of two apposed aspartic acid residues. Initially, virus-like particles (VLPs) are composed of the structural unprocessed proteins Gag and Gag-Pol, and also contain the host initiator methionine tRNA (tRNA(i)-Met) which serves as a primer for minus-strand DNA synthesis, and a dimer of genomic Ty RNA. Processing of the polyproteins occurs within the particle and proceeds by an ordered pathway, called maturation. First, the protease (PR) is released by autocatalytic cleavage of the Gag-Pol polyprotein yielding capsid protein p45 and a Pol-p154 precursor protein. This cleavage is a prerequisite for subsequent processing of Pol-p154 at the remaining sites to release the mature structural and catalytic proteins. Maturation takes place prior to the RT reaction and is required to produce transposition-competent VLPs.

Its subcellular location is the cytoplasm. It localises to the nucleus. The catalysed reaction is DNA(n) + a 2'-deoxyribonucleoside 5'-triphosphate = DNA(n+1) + diphosphate. It carries out the reaction Endonucleolytic cleavage to 5'-phosphomonoester.. Capsid protein (CA) is the structural component of the virus-like particle (VLP), forming the shell that encapsulates the retrotransposons dimeric RNA genome. The particles are assembled from trimer-clustered units and there are holes in the capsid shells that allow for the diffusion of macromolecules. CA also has nucleocapsid-like chaperone activity, promoting primer tRNA(i)-Met annealing to the multipartite primer-binding site (PBS), dimerization of Ty1 RNA and initiation of reverse transcription. In terms of biological role, the aspartyl protease (PR) mediates the proteolytic cleavages of the Gag and Gag-Pol polyproteins after assembly of the VLP. Its function is as follows. Reverse transcriptase/ribonuclease H (RT) is a multifunctional enzyme that catalyzes the conversion of the retro-elements RNA genome into dsDNA within the VLP. The enzyme displays a DNA polymerase activity that can copy either DNA or RNA templates, and a ribonuclease H (RNase H) activity that cleaves the RNA strand of RNA-DNA heteroduplexes during plus-strand synthesis and hydrolyzes RNA primers. The conversion leads to a linear dsDNA copy of the retrotransposon that includes long terminal repeats (LTRs) at both ends. Functionally, integrase (IN) targets the VLP to the nucleus, where a subparticle preintegration complex (PIC) containing at least integrase and the newly synthesized dsDNA copy of the retrotransposon must transit the nuclear membrane. Once in the nucleus, integrase performs the integration of the dsDNA into the host genome. The polypeptide is Transposon Ty1-BL Gag-Pol polyprotein (TY1B-BL) (Saccharomyces cerevisiae (strain ATCC 204508 / S288c) (Baker's yeast)).